The following is a 197-amino-acid chain: Translation machinery-associated protein 22 (197 aa).

The 72-residue stretch at 103–174 (IRIKRVERNK…DVREFLIKNY (72 aa)) folds into the SUI1 domain.

The protein belongs to the DENR family. Interacts with the 40S ribosomal subunit.

It is found in the cytoplasm. This is Translation machinery-associated protein 22 (tma22) from Botryotinia fuckeliana (strain B05.10) (Noble rot fungus).